Consider the following 722-residue polypeptide: Polyribonucleotide nucleotidyltransferase (722 aa).

Mg(2+)-binding residues include Asp505 and Asp511. The KH domain occupies 572–631 (PSITTIKIHPDKIRDVIGKGGATIRGICDETGASIDLDDDGNVKIYADNAAAAQAAVNRV). In terms of domain architecture, S1 motif spans 641-709 (GAIYKGRVER…NRGRVKLSMK (69 aa)).

This sequence belongs to the polyribonucleotide nucleotidyltransferase family. In terms of assembly, component of the RNA degradosome, which is a multiprotein complex involved in RNA processing and mRNA degradation. Requires Mg(2+) as cofactor.

It is found in the cytoplasm. It catalyses the reaction RNA(n+1) + phosphate = RNA(n) + a ribonucleoside 5'-diphosphate. Its function is as follows. Involved in mRNA degradation. Catalyzes the phosphorolysis of single-stranded polyribonucleotides processively in the 3'- to 5'-direction. The protein is Polyribonucleotide nucleotidyltransferase of Marinobacter nauticus (strain ATCC 700491 / DSM 11845 / VT8) (Marinobacter aquaeolei).